The following is a 406-amino-acid chain: MAENGKNCDQRRIAMSKDQHNGSLTDPSSVHEKKRRDREERQNIVLWRQPLITLQYFSLETLVVLKEWTSKLWHRQSIVVSFLLLLAALVATYYVEGAHQQYVQRIEKQFLLYAYWIGLGILSSVGLGTGLHTFLLYLGPHIASVTLAAYECNSVNFPEPPYPDQIICPEEEGAEGAISLWSIISKVRIEACMWGIGTAIGELPPYFMARAARLSGAEPDDEEYQEFEEMLEHAEAAQDFASRAKLAVQKLVQKVGFFGILACASIPNPLFDLAGITCGHFLVPFWTFFGATLIGKAIIKMHIQKIFVIVTFSKHIVEQMVTFIGAVPGIGPSLQKPFQEYLEAQRQKLHHRSEAGTPQGENWLSWMFEKLVVAMVCYFVLSIINSMAQNYAKRIQQRLNSEEKTK.

The segment covering 1-20 (MAENGKNCDQRRIAMSKDQH) has biased composition (basic and acidic residues). Positions 1 to 37 (MAENGKNCDQRRIAMSKDQHNGSLTDPSSVHEKKRRD) are disordered. Ala2 carries the post-translational modification N-acetylalanine. At 2-77 (AENGKNCDQR…WTSKLWHRQS (76 aa)) the chain is on the cytoplasmic side. Residues 78–98 (IVVSFLLLLAALVATYYVEGA) form a helical membrane-spanning segment. Residues 99–109 (HQQYVQRIEKQ) lie on the Extracellular side of the membrane. Residues 110–130 (FLLYAYWIGLGILSSVGLGTG) form a helical membrane-spanning segment. Topologically, residues 131–250 (LHTFLLYLGP…ASRAKLAVQK (120 aa)) are cytoplasmic. Positions 173–316 (GAEGAISLWS…FVIVTFSKHI (144 aa)) are VTT domain. The helical transmembrane segment at 251-271 (LVQKVGFFGILACASIPNPLF) threads the bilayer. Residues 272-273 (DL) lie on the Extracellular side of the membrane. The helical transmembrane segment at 274–294 (AGITCGHFLVPFWTFFGATLI) threads the bilayer. At 295 to 305 (GKAIIKMHIQK) the chain is on the cytoplasmic side. The chain crosses the membrane as a helical span at residues 306-326 (IFVIVTFSKHIVEQMVTFIGA). At 327–363 (VPGIGPSLQKPFQEYLEAQRQKLHHRSEAGTPQGENW) the chain is on the extracellular side. A helical membrane pass occupies residues 364–384 (LSWMFEKLVVAMVCYFVLSII). Residues 385 to 406 (NSMAQNYAKRIQQRLNSEEKTK) are Cytoplasmic-facing.

Belongs to the VMP1 family. In terms of assembly, interacts with BECN1. Interacts with TJP1. Interacts with TP53INP2. Interacts with TMEM41B. Interacts with ATP2A2, PLN and SLN; competes with PLN and SLN to prevent them from forming an inhibitory complex with ATP2A2. Interacts with ATG2A.

The protein localises to the endoplasmic reticulum-Golgi intermediate compartment membrane. The protein resides in the cell membrane. It is found in the vacuole membrane. It localises to the endoplasmic reticulum membrane. The catalysed reaction is a 1,2-diacyl-sn-glycero-3-phospho-L-serine(in) = a 1,2-diacyl-sn-glycero-3-phospho-L-serine(out). It carries out the reaction cholesterol(in) = cholesterol(out). The enzyme catalyses a 1,2-diacyl-sn-glycero-3-phosphocholine(in) = a 1,2-diacyl-sn-glycero-3-phosphocholine(out). It catalyses the reaction a 1,2-diacyl-sn-glycero-3-phosphoethanolamine(in) = a 1,2-diacyl-sn-glycero-3-phosphoethanolamine(out). Functionally, phospholipid scramblase involved in lipid homeostasis and membrane dynamics processes. Has phospholipid scramblase activity toward cholesterol and phosphatidylserine, as well as phosphatidylethanolamine and phosphatidylcholine. Required for autophagosome formation: participates in early stages of autophagosome biogenesis at the endoplasmic reticulum (ER) membrane by reequilibrating the leaflets of the ER as lipids are extracted by ATG2 (ATG2A or ATG2B) to mediate autophagosome assembly. Regulates ATP2A2 activity to control ER-isolation membrane contacts for autophagosome formation. In addition to autophagy, involved in other processes in which phospholipid scramblase activity is required. Modulates ER contacts with lipid droplets, mitochondria and endosomes. Plays an essential role in formation of cell junctions. Upon stress such as bacterial and viral infection, promotes formation of cytoplasmic vacuoles followed by cell death. Involved in the cytoplasmic vacuolization of acinar cells during the early stage of acute pancreatitis. The protein is Vacuole membrane protein 1 of Mus musculus (Mouse).